We begin with the raw amino-acid sequence, 290 residues long: uncharacterized protein (290 aa).

This is an uncharacterized protein from Escherichia phage lambda (Bacteriophage lambda).